The chain runs to 133 residues: Small ribosomal subunit protein uS11 (133 aa).

This sequence belongs to the universal ribosomal protein uS11 family. In terms of assembly, part of the 30S ribosomal subunit. Interacts with proteins S7 and S18. Binds to IF-3.

Its function is as follows. Located on the platform of the 30S subunit, it bridges several disparate RNA helices of the 16S rRNA. Forms part of the Shine-Dalgarno cleft in the 70S ribosome. In Brevibacillus brevis (strain 47 / JCM 6285 / NBRC 100599), this protein is Small ribosomal subunit protein uS11.